A 453-amino-acid chain; its full sequence is MKSLIQEKWNEILEFLKIEYNVTEVSYKTWLLPLKVYDVKDNVIKLSVDDTKIGANSLDFIKNKYSQFLKTAIAEVINQDFEIEFVLLSQTKAEEKVQTQAPNKIKNESLSYLNPRYTFDTFVVGANNNLAHAASLAVAESPAEIYNPLFIYGGVGLGKTHLMHSIAHYILEQNPNSKVLYVTSEKFTNELIESIRNADTTPTEFREKYRNIDVLLIDDIQFIIGKERTQEEFFHTFNTLHESKKQIIISSDKPPKDILTLEERLRSRFEWGLTVDIQSPDYETRMAILKKKEELDCLTIDDEVMKYIASNIKSNIRELEGALTKIVALSRLKKKEVDVILAEEALKDLISPDNKKTVTLDLIIEVVSEHFTTSTSEIYSDNRSRNIAYPRQIAMYLCRKLTSLSLTDIGKMMGNRDHSTVLHGCNKVEKDIKKDPSFQNTIDVLIKKINPTP.

The segment at 1-79 is domain I, interacts with DnaA modulators; that stretch reads MKSLIQEKWN…KTAIAEVINQ (79 aa). The segment at 79-111 is domain II; the sequence is QDFEIEFVLLSQTKAEEKVQTQAPNKIKNESLS. The tract at residues 112-330 is domain III, AAA+ region; it reads YLNPRYTFDT…GALTKIVALS (219 aa). Residues G156, G158, K159, and T160 each contribute to the ATP site. The segment at 331-453 is domain IV, binds dsDNA; sequence RLKKKEVDVI…VLIKKINPTP (123 aa).

Belongs to the DnaA family. In terms of assembly, oligomerizes as a right-handed, spiral filament on DNA at oriC.

It localises to the cytoplasm. Its function is as follows. Plays an essential role in the initiation and regulation of chromosomal replication. ATP-DnaA binds to the origin of replication (oriC) to initiate formation of the DNA replication initiation complex once per cell cycle. Binds the DnaA box (a 9 base pair repeat at the origin) and separates the double-stranded (ds)DNA. Forms a right-handed helical filament on oriC DNA; dsDNA binds to the exterior of the filament while single-stranded (ss)DNA is stabiized in the filament's interior. The ATP-DnaA-oriC complex binds and stabilizes one strand of the AT-rich DNA unwinding element (DUE), permitting loading of DNA polymerase. After initiation quickly degrades to an ADP-DnaA complex that is not apt for DNA replication. Binds acidic phospholipids. The protein is Chromosomal replication initiator protein DnaA of Lachnoclostridium phytofermentans (strain ATCC 700394 / DSM 18823 / ISDg) (Clostridium phytofermentans).